A 72-amino-acid polypeptide reads, in one-letter code: Conotoxin Vc6.16 (72 aa).

Positions 1-19 are cleaved as a signal peptide; it reads MQKLIILLLVAAVLMSTQA. A propeptide spanning residues 20–44 is cleaved from the precursor; the sequence is LFQEKRPKEKIDLLSKRKTDAEKQQ. 3 disulfides stabilise this stretch: Cys-48–Cys-62, Cys-55–Cys-66, and Cys-61–Cys-71.

Belongs to the conotoxin O2 superfamily. Expressed by the venom duct.

It localises to the secreted. Its function is as follows. Inhibits voltage-gated ion channels. The protein is Conotoxin Vc6.16 of Conus victoriae (Queen Victoria cone).